A 478-amino-acid chain; its full sequence is Zinc metalloproteinase/disintegrin (478 aa).

The N-terminal stretch at 1–20 (MIQVLLVTICLAAFPYQGSS) is a signal peptide. The propeptide occupies 21 to 188 (IILESGNVND…PIKKVSQLNL (168 aa)). In terms of domain architecture, Peptidase M12B spans 194 to 391 (RHVDIVVVVD…QNPQCILNKP (198 aa)). An intrachain disulfide couples Cys207 to Cys248. The N-linked (GlcNAc...) (complex) asparagine glycan is linked to Asn279. Cystine bridges form between Cys305–Cys386, Cys345–Cys370, and Cys347–Cys353. His330 contributes to the Zn(2+) binding site. Residue Glu331 is part of the active site. His334 and His340 together coordinate Zn(2+). An N-linked (GlcNAc...) (complex) asparagine glycan is attached at Asn369. A propeptide spanning residues 392–407 (LRTVSIPVSGNEHLEA) is cleaved from the precursor. The Disintegrin domain maps to 397–478 (IPVSGNEHLE…ADCPRYHSHA (82 aa)). 6 disulfide bridges follow: Cys411–Cys426, Cys413–Cys421, Cys420–Cys443, Cys434–Cys440, Cys439–Cys464, and Cys452–Cys471. Residues 456–458 (RGD) carry the Cell attachment site motif. Residues 476–478 (SHA) constitute a propeptide that is removed on maturation.

The protein belongs to the venom metalloproteinase (M12B) family. P-II subfamily. P-IIa sub-subfamily. In terms of assembly, monomeric (disintegrin). Requires Zn(2+) as cofactor. Glycans are composed of 4 GlcNAc, 3 Man, 2 Gal, 2 NeuAC and 1 Fuc residue. As to expression, expressed by the venom gland.

The protein resides in the secreted. In terms of biological role, impairs hemostasis in the envenomed animal. Functionally, inhibits platelet aggregation induced by ADP, thrombin, platelet-activating factor and collagen. Acts by inhibiting fibrinogen interaction with platelet receptors alpha-IIb/beta-3 (ITGA2B/ITGB3). In Calloselasma rhodostoma (Malayan pit viper), this protein is Zinc metalloproteinase/disintegrin.